The primary structure comprises 384 residues: Succinyl-diaminopimelate desuccinylase (384 aa).

Position 71 (histidine 71) interacts with Zn(2+). Aspartate 73 is an active-site residue. Aspartate 104 is a Zn(2+) binding site. Residue glutamate 139 is the Proton acceptor of the active site. Zn(2+) is bound by residues glutamate 140, glutamate 168, and histidine 357.

Belongs to the peptidase M20A family. DapE subfamily. In terms of assembly, homodimer. It depends on Zn(2+) as a cofactor. The cofactor is Co(2+).

The catalysed reaction is N-succinyl-(2S,6S)-2,6-diaminopimelate + H2O = (2S,6S)-2,6-diaminopimelate + succinate. It functions in the pathway amino-acid biosynthesis; L-lysine biosynthesis via DAP pathway; LL-2,6-diaminopimelate from (S)-tetrahydrodipicolinate (succinylase route): step 3/3. Catalyzes the hydrolysis of N-succinyl-L,L-diaminopimelic acid (SDAP), forming succinate and LL-2,6-diaminopimelate (DAP), an intermediate involved in the bacterial biosynthesis of lysine and meso-diaminopimelic acid, an essential component of bacterial cell walls. The polypeptide is Succinyl-diaminopimelate desuccinylase (Bradyrhizobium sp. (strain BTAi1 / ATCC BAA-1182)).